The following is a 155-amino-acid chain: Small ribosomal subunit protein uS7c (155 aa).

It belongs to the universal ribosomal protein uS7 family. In terms of assembly, part of the 30S ribosomal subunit.

It localises to the plastid. The protein resides in the chloroplast. In terms of biological role, one of the primary rRNA binding proteins, it binds directly to 16S rRNA where it nucleates assembly of the head domain of the 30S subunit. This Canella winterana (Wild cinnamon) protein is Small ribosomal subunit protein uS7c (rps7).